Consider the following 153-residue polypeptide: E3 ubiquitin-protein ligase AIRP1 (153 aa).

Residues 104-145 (CPICLEEYEIDNPKLLTKCGHDFHLACILAWMERSEACPVCD) form an RING-type; atypical zinc finger.

The protein localises to the cytoplasm. The protein resides in the cytosol. It carries out the reaction S-ubiquitinyl-[E2 ubiquitin-conjugating enzyme]-L-cysteine + [acceptor protein]-L-lysine = [E2 ubiquitin-conjugating enzyme]-L-cysteine + N(6)-ubiquitinyl-[acceptor protein]-L-lysine.. Possesses E3 ubiquitin-protein ligase activity in vitro when associated with the E2 enzyme UBC8 in vitro. Plays combinatory roles with AIRP2 in the positive regulation of the abscisic acid-mediated drought stress response. The chain is E3 ubiquitin-protein ligase AIRP1 from Arabidopsis thaliana (Mouse-ear cress).